Here is a 255-residue protein sequence, read N- to C-terminus: 14-3-3-like protein GF14 psi (255 aa).

Residue Ser66 is modified to Phosphoserine. Thr162 is subject to Phosphothreonine. Phosphoserine is present on Ser189. Residues Thr210 and Thr238 each carry the phosphothreonine modification.

Belongs to the 14-3-3 family. In terms of assembly, component of a DNA binding complex that binds to the G box. Interacts with IDH3, AGT3, GLN1-1, GLN1-2, GLN1-4, SAM1, SAM2, MDH1, METK3 and MDH2. Binds to 1-aminocyclopropane-1-carboxylate synthases (ACS) such as ACS2, ACS5, ACS6, ACS8, and ACS11. Interacts with FD. Interacts with DREB1A and DREB1B in the nucleus. Interacts with CINV1.

It is found in the cytoplasm. Its subcellular location is the nucleus. Its function is as follows. Is associated with a DNA binding complex that binds to the G box, a well-characterized cis-acting DNA regulatory element found in plant genes. Involved in the regulation of nutrient metabolism. Reciprocal negative transcription regulation of miR396. Negative regulator of constitutive freezing tolerance and cold acclimation by controlling cold-induced gene expression partially through an ethylene (ET)-dependent pathway; prevents ethylene (ET) biosynthesis, probably by binding 1-aminocyclopropane-1-carboxylate synthases (ACS) to reduce their stability, thus contributing to establish adequate ET levels under both standard and low-temperature conditions. In Arabidopsis thaliana (Mouse-ear cress), this protein is 14-3-3-like protein GF14 psi.